A 69-amino-acid polypeptide reads, in one-letter code: Ribosome modulation factor (69 aa).

Belongs to the ribosome modulation factor family.

It is found in the cytoplasm. In terms of biological role, during stationary phase, converts 70S ribosomes to an inactive dimeric form (100S ribosomes). In Chromohalobacter salexigens (strain ATCC BAA-138 / DSM 3043 / CIP 106854 / NCIMB 13768 / 1H11), this protein is Ribosome modulation factor.